A 185-amino-acid chain; its full sequence is Dual-action ribosomal maturation protein DarP (185 aa).

Residues 1–22 (MWKNGAMRGCNKETGEFLGPSR) form a disordered region.

This sequence belongs to the DarP family.

Its subcellular location is the cytoplasm. In terms of biological role, member of a network of 50S ribosomal subunit biogenesis factors which assembles along the 30S-50S interface, preventing incorrect 23S rRNA structures from forming. Promotes peptidyl transferase center (PTC) maturation. This chain is Dual-action ribosomal maturation protein DarP, found in Xylella fastidiosa (strain 9a5c).